Consider the following 358-residue polypeptide: Photosystem II protein D1 2 (358 aa).

Transmembrane regions (helical) follow at residues 28–45 (YVGW…AATI), 117–132 (HFLI…QWEL), and 141–155 (WICV…AAMA). Histidine 117 is a binding site for chlorophyll a. Tyrosine 125 is a binding site for pheophytin a. [CaMn4O5] cluster is bound by residues aspartate 169 and glutamate 188. The chain crosses the membrane as a helical span at residues 196 to 217 (FHMLGVAGVFGGSLFSAMHGSL). Position 197 (histidine 197) interacts with chlorophyll a. Residues histidine 214 and 263 to 264 (SF) each bind a quinone. Histidine 214 contributes to the Fe cation binding site. A Fe cation-binding site is contributed by histidine 271. The helical transmembrane segment at 273 to 287 (FLGAWPVVGIWFTSM) threads the bilayer. Residues histidine 331, glutamate 332, aspartate 341, and alanine 343 each contribute to the [CaMn4O5] cluster site. The propeptide occupies 344 to 358 (AAESTPVALQAPAIG).

The protein belongs to the reaction center PufL/M/PsbA/D family. In terms of assembly, PSII is composed of 1 copy each of membrane proteins PsbA, PsbB, PsbC, PsbD, PsbE, PsbF, PsbH, PsbI, PsbJ, PsbK, PsbL, PsbM, PsbT, PsbX, PsbY, PsbZ, Psb30/Ycf12, peripheral proteins PsbO, CyanoQ (PsbQ), PsbU, PsbV and a large number of cofactors. It forms dimeric complexes. The D1/D2 heterodimer binds P680, chlorophylls that are the primary electron donor of PSII, and subsequent electron acceptors. It shares a non-heme iron and each subunit binds pheophytin, quinone, additional chlorophylls, carotenoids and lipids. D1 provides most of the ligands for the Mn4-Ca-O5 cluster of the oxygen-evolving complex (OEC). There is also a Cl(-1) ion associated with D1 and D2, which is required for oxygen evolution. The PSII complex binds additional chlorophylls, carotenoids and specific lipids. is required as a cofactor. Post-translationally, tyr-160 forms a radical intermediate that is referred to as redox-active TyrZ, YZ or Y-Z. C-terminally processed by CtpA; processing is essential to allow assembly of the oxygen-evolving complex and thus photosynthetic growth.

Its subcellular location is the cellular thylakoid membrane. It carries out the reaction 2 a plastoquinone + 4 hnu + 2 H2O = 2 a plastoquinol + O2. Functionally, photosystem II (PSII) is a light-driven water:plastoquinone oxidoreductase that uses light energy to abstract electrons from H(2)O, generating O(2) and a proton gradient subsequently used for ATP formation. It consists of a core antenna complex that captures photons, and an electron transfer chain that converts photonic excitation into a charge separation. The D1/D2 (PsbA/PsbD) reaction center heterodimer binds P680, the primary electron donor of PSII as well as several subsequent electron acceptors. The chain is Photosystem II protein D1 2 from Synechococcus sp. (strain CC9605).